A 1222-amino-acid polypeptide reads, in one-letter code: Serine/threonine-protein kinase WNK4 (1222 aa).

Polar residues predominate over residues 1–17 (MLAPRNTETGVHMSQTE). Residues 1-163 (MLAPRNTETG…KEDTETQAVA (163 aa)) are disordered. At Ser-95 the chain carries Phosphoserine. The segment covering 135–152 (EPPRVPDAAARERRREQE) has biased composition (basic and acidic residues). Residues Lys-154 and Lys-172 each participate in a glycyl lysine isopeptide (Lys-Gly) (interchain with G-Cter in ubiquitin) cross-link. The region spanning 171-429 (LKFDIEIGRG…IQDLLTHAFF (259 aa)) is the Protein kinase domain. Ser-181 lines the ATP pocket. Residues Lys-183, Lys-223, and Lys-238 each participate in a glycyl lysine isopeptide (Lys-Gly) (interchain with G-Cter in ubiquitin) cross-link. ATP contacts are provided by residues 251 to 254 (TELM) and Lys-301. The Proton acceptor role is filled by Asp-318. A Glycyl lysine isopeptide (Lys-Gly) (interchain with G-Cter in ubiquitin) cross-link involves residue Lys-325. Residues Ser-328 and Ser-332 each carry the phosphoserine; by autocatalysis modification. Glycyl lysine isopeptide (Lys-Gly) (interchain with G-Cter in ubiquitin) cross-links involve residues Lys-384, Lys-390, Lys-447, and Lys-451. A disordered region spans residues 527-562 (LEVLPPDSGPPPATVSMTPGPPSAFPPEPEEPEADQ). The segment covering 533 to 553 (DSGPPPATVSMTPGPPSAFPP) has biased composition (pro residues). Residues 554–564 (EPEEPEADQHQ) are interaction with KLHL3. At Ser-572 the chain carries Phosphoserine. Disordered regions lie at residues 591–612 (FLDA…PAEP), 626–679 (RSGP…SVSD), 747–809 (DAGP…GTPF), 836–873 (QVSS…SPLP), and 927–1087 (SPGL…QPSP). A compositionally biased stretch (low complexity) spans 627–638 (SGPGSDFSPGDS). Over residues 659 to 672 (NPVKTLRRRPRSRL) the composition is skewed to basic residues. Composition is skewed to low complexity over residues 792–809 (FSTS…GTPF) and 845–873 (APSS…SPLP). Residues 935–946 (PPAPPGPLPSMP) show a composition bias toward pro residues. Residues 953–963 (DQESLSAQTAE) show a composition bias toward polar residues. Lys-990 participates in a covalent cross-link: Glycyl lysine isopeptide (Lys-Gly) (interchain with G-Cter in ubiquitin). Positions 996–999 (RFQV) match the RFXV motif motif. Ser-1014 bears the Phosphoserine mark. A compositionally biased stretch (basic and acidic residues) spans 1044-1056 (ETREALAESDRAA). A compositionally biased stretch (polar residues) spans 1076–1086 (GGSSPILSQPS). Residues Lys-1123, Lys-1136, and Lys-1137 each participate in a glycyl lysine isopeptide (Lys-Gly) (interchain with G-Cter in ubiquitin) cross-link. The tract at residues 1169–1222 (SKGSFPTSRRNSLQRSDLPGPGIMRRNSLSGSSTGSQEQRASKGVTFAGDVGRM) is disordered. Composition is skewed to polar residues over residues 1172 to 1183 (SFPTSRRNSLQR) and 1195 to 1207 (NSLS…SQEQ). Ser-1196 carries the post-translational modification Phosphoserine.

Belongs to the protein kinase superfamily. Ser/Thr protein kinase family. WNK subfamily. Interacts with the C-terminal region of KCNJ1. Interacts with WNK1 and WNK3. Interacts with KLHL3. Mg(2+) is required as a cofactor. Post-translationally, autophosphorylated at Ser-328 and Ser-332, promoting its activation. Phosphorylated by WNK1 and WNK3. Phosphorylated at Ser-572 in a MAP3K15/ASK3-dependent process in response to osmotic stress or hypotonic low-chloride stimulation. Ubiquitinated by the BCR(KLHL3) complex, leading to its degradation. Also ubiquitinated by the BCR(KLHL2) complex.

It is found in the cell junction. The protein resides in the tight junction. It catalyses the reaction L-seryl-[protein] + ATP = O-phospho-L-seryl-[protein] + ADP + H(+). It carries out the reaction L-threonyl-[protein] + ATP = O-phospho-L-threonyl-[protein] + ADP + H(+). Its activity is regulated as follows. Activation requires autophosphorylation of Ser-328 and Ser-332. Autophosphorylation and subsequent activation is inhibited by increases in intracellular ionic strength: Cl(-) potently inhibits WNK4 kinase activity via direct binding. Also inhibited by K(+) ions. In terms of biological role, serine/threonine-protein kinase component of the WNK4-SPAK/OSR1 kinase cascade, which acts as a key regulator of ion transport in the distal nephron and blood pressure. The WNK4-SPAK/OSR1 kinase cascade is composed of WNK4, which mediates phosphorylation and activation of downstream kinases OXSR1/OSR1 and STK39/SPAK. Following activation, OXSR1/OSR1 and STK39/SPAK catalyze phosphorylation of ion cotransporters, such as SLC12A1/NKCC2, SLC12A2/NKCC1, SLC12A3/NCC, SLC12A5/KCC2 or SLC12A6/KCC3, regulating their activity. Acts as a molecular switch that regulates the balance between renal salt reabsorption and K(+) secretion by modulating the activities of renal transporters and channels, including the Na-Cl cotransporter SLC12A3/NCC and the K(+) channel, KCNJ1/ROMK. Regulates NaCl reabsorption in the distal nephron by activating the thiazide-sensitive Na-Cl cotransporter SLC12A3/NCC in distal convoluted tubule cells of kidney: activates SLC12A3/NCC in a OXSR1/OSR1- and STK39/SPAK-dependent process. Also acts as a scaffold protein independently of its protein kinase activity: negatively regulates cell membrane localization of various transporters and channels (CFTR, KCNJ1/ROMK, SLC4A4, SLC26A9 and TRPV4) by clathrin-dependent endocytosis. Also inhibits the activity of the epithelial Na(+) channel (ENaC) SCNN1A, SCNN1B, SCNN1D in a inase-independent mechanism. May also phosphorylate NEDD4L. In Rattus norvegicus (Rat), this protein is Serine/threonine-protein kinase WNK4.